Consider the following 476-residue polypeptide: Serine/threonine-protein kinase WAG1 (476 aa).

The Protein kinase domain occupies 93–400 (FKLVRHLGTG…AQDIKRHEFF (308 aa)). Residues 99-107 (LGTGNLGRV) and lysine 124 each bind ATP. Aspartate 219 acts as the Proton acceptor in catalysis.

This sequence belongs to the protein kinase superfamily. Ser/Thr protein kinase family. Expressed in root tips and lateral root primordia.

It is found in the cytoplasm. The protein resides in the cytosol. It catalyses the reaction L-seryl-[protein] + ATP = O-phospho-L-seryl-[protein] + ADP + H(+). It carries out the reaction L-threonyl-[protein] + ATP = O-phospho-L-threonyl-[protein] + ADP + H(+). Functionally, serine/threonine-protein kinase involved in the regulation of auxin signaling. Acts as a positive regulator of cellular auxin efflux and regulates organ development by enhancing PIN-mediated polar auxin transport. Phosphorylates conserved serine residues in the PIN auxin efflux carriers. Phosphorylation of PIN proteins is required and sufficient for apical-basal PIN polarity that enables directional intercellular auxin fluxes, which mediate differential growth, tissue patterning and organogenesis. Acts as a suppressor of root waving. This is Serine/threonine-protein kinase WAG1 (WAG1) from Arabidopsis thaliana (Mouse-ear cress).